The primary structure comprises 454 residues: C4-dicarboxylate transport protein (454 aa).

The next 9 membrane-spanning stretches (helical) occupy residues 33 to 53 (VQVLAAIAAGILLGHFYPDIG), 66 to 86 (LVKMIIAPVIFLTVATGIAGM), 101 to 121 (IYFLAFSTLALLVGLVVANLV), 148 to 168 (EQSITGFLMNIIPTTLVGAFA), 170 to 190 (GDILQVLFISVLFGISLAIVG), 210 to 230 (LVAILMKAAPIGAFGAMAFTI), 243 to 263 (MLIGTFYLTSFLFVFVVLGAV), 354 to 374 (LLLVAMLSSKGAAGITGAGFI), and 377 to 397 (AATLSVVPSVPVAGMALILGI).

The protein belongs to the dicarboxylate/amino acid:cation symporter (DAACS) (TC 2.A.23) family.

Its subcellular location is the cell inner membrane. In terms of biological role, responsible for the transport of dicarboxylates such as succinate, fumarate, and malate from the periplasm across the membrane. This chain is C4-dicarboxylate transport protein, found in Sinorhizobium medicae (strain WSM419) (Ensifer medicae).